A 326-amino-acid chain; its full sequence is RNA/RNP complex-1-interacting phosphatase (326 aa).

Positions 1–28 are disordered; sequence MNQWHYGRYSRGRDFTARAPPKKKGKNQ. One can recognise a Tyrosine-protein phosphatase domain in the interval 59 to 206; sequence FEAKLMPEEC…LQKRRVRKNQ (148 aa). Cysteine 150 acts as the Phosphocysteine intermediate in catalysis. Residue 151-156 coordinates substrate; sequence THGLNR. The active-site Proton donor/acceptor is the arginine 156. The tract at residues 200–258 is disordered; sequence RRVRKNQNASASRSGGLEDSAHLTEQVHTTNKPVNKGPKKSRRGGHLESSQHVQTQSSA. The span at 247-258 shows a compositional bias: polar residues; sequence ESSQHVQTQSSA.

The protein belongs to the protein-tyrosine phosphatase family. Non-receptor class dual specificity subfamily. As to quaternary structure, monomer. May interact with SFRS7 and SFRS9/SRP30C.

It is found in the nucleus. Its subcellular location is the nucleus speckle. Its function is as follows. Possesses RNA 5'-triphosphatase and diphosphatase activities, but displays a poor protein-tyrosine phosphatase activity. In addition, has phosphatase activity with ATP, ADP and O-methylfluorescein phosphate (in vitro). Binds to RNA. May participate in nuclear mRNA metabolism. The chain is RNA/RNP complex-1-interacting phosphatase (Dusp11) from Rattus norvegicus (Rat).